A 168-amino-acid chain; its full sequence is Cilia- and flagella-associated protein 276 (168 aa).

Disordered stretches follow at residues 35 to 61 (AHLAQQQDPWSRLSSTPTATSRSRDTF) and 149 to 168 (HTAATNGGYSRKNDGGFFST). The span at 38–55 (AQQQDPWSRLSSTPTATS) shows a compositional bias: polar residues.

Microtubule inner protein component of sperm flagellar doublet microtubules. As to expression, predominantly expressed in nervous system tissues, such as the spinal cord, cerebrum, cerebellum, and sciatic nerve.

The protein resides in the cytoplasm. Its subcellular location is the cytoskeleton. It is found in the cilium axoneme. The protein localises to the flagellum axoneme. Functionally, microtubule inner protein (MIP) part of the dynein-decorated doublet microtubules (DMTs) in cilia axoneme, which is required for motile cilia beating. May play an important role for the maintenance of myelin-axon integrity. May affect intracellular Ca(2+) homeostasis. The protein is Cilia- and flagella-associated protein 276 of Mus musculus (Mouse).